Consider the following 299-residue polypeptide: Putative adenosine/adenine deaminase (299 aa).

The Zn(2+) site is built by histidine 16 and histidine 18. Substrate is bound by residues histidine 18 and glycine 157. Histidine 184 is a binding site for Zn(2+). The active-site Proton donor is glutamate 187. Residue aspartate 265 participates in Zn(2+) binding. A substrate-binding site is contributed by aspartate 266.

The protein belongs to the metallo-dependent hydrolases superfamily. Adenosine and AMP deaminases family. It depends on Zn(2+) as a cofactor.

Functionally, putative nucleoside deaminase. May catalyze the hydrolytic deamination of adenosine or some similar substrate and play a role in purine metabolism. This is Putative adenosine/adenine deaminase from Treponema pallidum (strain Nichols).